Here is a 310-residue protein sequence, read N- to C-terminus: Ribosomal RNA large subunit methyltransferase F (310 aa).

It belongs to the methyltransferase superfamily. METTL16/RlmF family.

It is found in the cytoplasm. It catalyses the reaction adenosine(1618) in 23S rRNA + S-adenosyl-L-methionine = N(6)-methyladenosine(1618) in 23S rRNA + S-adenosyl-L-homocysteine + H(+). Functionally, specifically methylates the adenine in position 1618 of 23S rRNA. The polypeptide is Ribosomal RNA large subunit methyltransferase F (Pseudoalteromonas translucida (strain TAC 125)).